Reading from the N-terminus, the 500-residue chain is NAD(P)H-quinone oxidoreductase chain 4, chloroplastic (500 aa).

The next 13 membrane-spanning stretches (helical) occupy residues 4 to 24 (FPWLTIIVVFPIFAGSLIFFL), 35 to 55 (YTICICILELLLTTYAFCYHF), 87 to 107 (IGPILLTGFITTLATLAAWPV), 134 to 154 (LLLFFIMWELELIPVYLLLAM), 167 to 187 (FILYTAGGSVFLLMGVLGVAL), 208 to 228 (VLEIIFYIGFFIAFAVKSPII), 242 to 262 (HYSTCMLLAGILLKMGAYGLI), 272 to 292 (AHSIFSPWLMIIGTIQIIYAA), 305 to 325 (IAYPSVSHMGFIIIGISSLTD), 330 to 350 (GALLQIISHGFIGAALFFLAG), 386 to 406 (LALPGMSGFVAELIVFFGIIT), 411 to 431 (LLIPKLLITFVMAIGIILTPI), and 462 to 482 (LFLSISIFLPVIGIGIYPDFV).

The protein belongs to the complex I subunit 4 family.

The protein resides in the plastid. It localises to the chloroplast thylakoid membrane. It catalyses the reaction a plastoquinone + NADH + (n+1) H(+)(in) = a plastoquinol + NAD(+) + n H(+)(out). The enzyme catalyses a plastoquinone + NADPH + (n+1) H(+)(in) = a plastoquinol + NADP(+) + n H(+)(out). The polypeptide is NAD(P)H-quinone oxidoreductase chain 4, chloroplastic (Solanum tuberosum (Potato)).